The chain runs to 143 residues: uncharacterized protein (143 aa).

A signal peptide spans 1 to 24 (MKKMLMLAFTFLLALTIHVGEASA).

This is an uncharacterized protein from Bacillus subtilis (strain 168).